The primary structure comprises 472 residues: 3-isopropylmalate dehydratase large subunit (472 aa).

[4Fe-4S] cluster-binding residues include Cys353, Cys414, and Cys417.

The protein belongs to the aconitase/IPM isomerase family. LeuC type 1 subfamily. As to quaternary structure, heterodimer of LeuC and LeuD. It depends on [4Fe-4S] cluster as a cofactor.

The catalysed reaction is (2R,3S)-3-isopropylmalate = (2S)-2-isopropylmalate. It functions in the pathway amino-acid biosynthesis; L-leucine biosynthesis; L-leucine from 3-methyl-2-oxobutanoate: step 2/4. Its function is as follows. Catalyzes the isomerization between 2-isopropylmalate and 3-isopropylmalate, via the formation of 2-isopropylmaleate. This is 3-isopropylmalate dehydratase large subunit from Acinetobacter baumannii (strain ATCC 17978 / DSM 105126 / CIP 53.77 / LMG 1025 / NCDC KC755 / 5377).